Consider the following 87-residue polypeptide: MANSAGSKKRARQAVKSRAHNGSLRSMVRTYLKKVDAAIEAGNQADAQAAYVLATSKLDKAADKGLYHKNKAARHKSRLSAKIKALA.

The interval 1–22 (MANSAGSKKRARQAVKSRAHNG) is disordered. A compositionally biased stretch (basic residues) spans 7–19 (SKKRARQAVKSRA).

The protein belongs to the bacterial ribosomal protein bS20 family.

Functionally, binds directly to 16S ribosomal RNA. This is Small ribosomal subunit protein bS20 from Marinomonas sp. (strain MWYL1).